A 180-amino-acid polypeptide reads, in one-letter code: Protein C2-DOMAIN ABA-RELATED 10 (180 aa).

Positions 1–105 (MDQKPLGLLT…EALKMGMELL (105 aa)) constitute a C2 domain. Positions 22, 23, 28, 74, 75, 76, and 82 each coordinate Ca(2+).

This sequence belongs to the plant CAR protein family. In terms of assembly, binds to PYR/PYL/RCAR abscisic acid intracellular receptors in an ABA-independent manner, both at the plasma membrane and in the nucleus.

It is found in the cell membrane. The protein resides in the nucleus. Functionally, stimulates the GTPase/ATPase activities of Obg-like ATPases. Mediates the transient calcium-dependent interaction of PYR/PYL/RCAR abscisic acid (ABA) receptors with the plasma membrane and thus regulates ABA sensitivity. This chain is Protein C2-DOMAIN ABA-RELATED 10, found in Arabidopsis thaliana (Mouse-ear cress).